Here is a 376-residue protein sequence, read N- to C-terminus: MTVSKFVQVRRDLHKIPEIGFKEWKTQQYILDYIGTLPNEYLEVKTWKTGVIVKVNGKNPEKIIGYRADIDGLPITEETGYEYSSVHEGMMHACGHDLHATIGLGLLTAAVSERIDDDLVFIFQPAEEGPGGALPMLESDELKEWKPNMILGLHIAPEYSVGTIATKEGLLFANTSELYVDLKGKGGHAAYPHTANDMIVAASHLVTQLQSVISRNVNPLDSAVITIGKITGGTVQNIIAEKSRLEGTIRTLSVESMKRVKSRIEAIVAGIEASFQCEAVIDYGAMYHQVYNHEELTREFMQFTREQTTMDVITCTEAMTGEDFGYMLREIPGFMFWLGVNSEYGLHHAKLKPDEEVIEKAIVFLNQYVKWKGNRK.

Residue aspartate 69 is part of the active site. Glutamate 128 (proton acceptor) is an active-site residue.

This sequence belongs to the peptidase M20A family. N-acetyldiaminopimelate deacetylase subfamily.

It carries out the reaction N-acetyl-(2S,6S)-2,6-diaminopimelate + H2O = (2S,6S)-2,6-diaminopimelate + acetate. Its pathway is amino-acid biosynthesis; L-lysine biosynthesis via DAP pathway; LL-2,6-diaminopimelate from (S)-tetrahydrodipicolinate (acetylase route): step 3/3. Its function is as follows. Catalyzes the conversion of N-acetyl-diaminopimelate to diaminopimelate and acetate. This is N-acetyldiaminopimelate deacetylase from Bacillus mycoides (strain KBAB4) (Bacillus weihenstephanensis).